A 90-amino-acid chain; its full sequence is MANHSSAKKAARQTVKRTLINKKRSSAIKTFIKKVVNEISLGNKENANLALSVAQSKIMQGVKKNIIKLNTASRKISRLSRQIQSMDKSK.

It belongs to the bacterial ribosomal protein bS20 family.

Its function is as follows. Binds directly to 16S ribosomal RNA. The protein is Small ribosomal subunit protein bS20 of Rickettsia canadensis (strain McKiel).